The chain runs to 577 residues: Moesin (577 aa).

The FERM domain maps to 2 to 295; it reads PKTINVRVTT…GNHELYMRRR (294 aa). S74 bears the Phosphoserine mark. Position 79 is an N6-acetyllysine (K79). At K83 the chain carries N6-succinyllysine. The [IL]-x-C-x-x-[DE] motif signature appears at 115–120; it reads IYCPPE. Y116 bears the Phosphotyrosine mark. Position 117 is an S-nitrosocysteine (C117). K139 and K165 each carry N6-acetyllysine. The segment covering 376 to 414 has biased composition (basic and acidic residues); it reads EQERKRAQSEAEKLAKERQEAEEAKEALLKASRDQKKTQ. Disordered stretches follow at residues 376–415 and 434–518; these read EQERKRAQSEAEKLAKERQEAEEAKEALLKASRDQKKTQE and ARQK…NERV. S407 is modified (phosphoserine). Residues 476–487 are compositionally biased toward acidic residues; the sequence is AENDQDEQDENG. Basic and acidic residues predominate over residues 492-518; sequence ADLRADAMAKDRSEEERTTEAEKNERV. S527 is modified (phosphoserine). Position 558 is a phosphothreonine; by ROCK2 and STK10 (T558).

In terms of assembly, binds NHERF1. In resting T-cells, part of a PAG1-NHERF1-MSN complex which is disrupted upon TCR activation. Interacts with PPP1R16B. Interacts with PDZD8. Interacts with SELPLG and SYK; mediates the activation of SYK by SELPLG. Interacts with PDPN (via cytoplasmic domain); activates RHOA and promotes epithelial-mesenchymal transition. Interacts with SPN/CD43 cytoplasmic tail, CD44 and ICAM2. In terms of processing, phosphorylation on Thr-558 is crucial for the formation of microvilli-like structures. Phosphorylation by ROCK2 suppresses the head-to-tail association of the N-terminal and C-terminal halves resulting in an opened conformation which is capable of actin and membrane-binding. Phosphorylation on Thr-558 by STK10 negatively regulates lymphocyte migration and polarization. Post-translationally, S-nitrosylation of Cys-117 is induced by interferon-gamma and oxidatively-modified low-densitity lipoprotein (LDL(ox)) implicating the iNOS-S100A8/9 transnitrosylase complex.

It localises to the cell membrane. It is found in the cytoplasm. The protein localises to the cytoskeleton. The protein resides in the apical cell membrane. Its subcellular location is the cell projection. It localises to the microvillus membrane. It is found in the microvillus. Its activity is regulated as follows. A head-to-tail association, of the N-terminal and C-terminal halves results in a closed conformation (inactive form) which is incapable of actin or membrane-binding. Its function is as follows. Probably involved in connections of major cytoskeletal structures to the plasma membrane. Plays a role in regulating the proliferation, migration, and adhesion of human lymphoid cells and participates in immunologic synapse formation. This Sus scrofa (Pig) protein is Moesin.